The sequence spans 107 residues: Cytochrome c oxidase assembly protein COX16 homolog, mitochondrial (107 aa).

Residues 1–14 are Mitochondrial matrix-facing; it reads MFGYAVRRALRKSK. The chain crosses the membrane as a helical span at residues 15-37; the sequence is TLRYGVPMLLLIVGGSFGLREFS. Over 38 to 107 the chain is Mitochondrial intermembrane; the sequence is QIRYDAVKIK…PEILKTNKTT (70 aa). Positions 80 to 107 are disordered; it reads NIRGPRPWEDPDLLQGRNPEILKTNKTT.

The protein belongs to the COX16 family. In terms of assembly, associates with the MITRAC complex. Interacts with MT-CO2/COX; specifically interacts with newly synthesized MT-CO2/COX. Interacts with SCO1, SCO2 and COA6.

The protein resides in the mitochondrion inner membrane. Functionally, required for the assembly of the mitochondrial respiratory chain complex IV (CIV), also known as cytochrome c oxidase. Promotes the insertion of copper into the active site of cytochrome c oxidase subunit II (MT-CO2/COX2). Interacts specifically with newly synthesized MT-CO2/COX and its copper center-forming metallochaperones SCO1, SCO2 and COA6. Probably facilitates MT-CO2/COX2 association with the MITRAC assembly intermediate containing MT-CO1/COX1, thereby participating in merging the MT-CO1/COX1 and MT-CO2/COX2 assembly lines. In Bos taurus (Bovine), this protein is Cytochrome c oxidase assembly protein COX16 homolog, mitochondrial.